The following is a 378-amino-acid chain: Ret finger protein-like 2 (378 aa).

The RING-type; degenerate zinc finger occupies 101–143 (CPVCSDYLEKPMSLECGCAVCLKCINSLQKEPHGEDLLCCCSS). Residues 168 to 362 (EPKLKKILQM…DQGVLSICPL (195 aa)) enclose the B30.2/SPRY domain.

In terms of tissue distribution, seems to be expressed in prostate and less abundantly in adult brain, fetal liver, and fetal kidney.

This chain is Ret finger protein-like 2 (RFPL2), found in Homo sapiens (Human).